Here is a 320-residue protein sequence, read N- to C-terminus: uncharacterized protein (320 aa).

The disordered stretch occupies residues 1-40; the sequence is MDHPSTSSLPRKKVKAGVKKAGKKTGKKTTGKKKTTPSAI. Positions 10–35 are enriched in basic residues; the sequence is PRKKVKAGVKKAGKKTGKKTTGKKKT. The chain crosses the membrane as a helical span at residues 51 to 71; sequence LLVLLAVLSYLAALSLGLYIM. Asn92, Asn122, Asn154, and Asn167 each carry an N-linked (GlcNAc...) asparagine glycan. The next 2 helical transmembrane spans lie at 186–206 and 216–236; these read PLVH…AMTG and MLVT…VTVL. N-linked (GlcNAc...) asparagine glycosylation occurs at Asn247. Residues 272 to 292 form a helical membrane-spanning segment; sequence VQGALVAIVAVFYLTMGVVFV.

The protein localises to the membrane. It functions in the pathway secondary metabolite biosynthesis; terpenoid biosynthesis. In terms of biological role, part of the gene cluster that mediates the biosynthesis of an ophiobolin family sesterterpenoid. This is an uncharacterized protein from Aspergillus terreus.